The primary structure comprises 102 residues: Small ribosomal subunit protein uS10 (102 aa).

This sequence belongs to the universal ribosomal protein uS10 family. Part of the 30S ribosomal subunit.

Functionally, involved in the binding of tRNA to the ribosomes. The sequence is that of Small ribosomal subunit protein uS10 from Carboxydothermus hydrogenoformans (strain ATCC BAA-161 / DSM 6008 / Z-2901).